Reading from the N-terminus, the 334-residue chain is RNA ligase 2 (334 aa).

Positions 1–234 (MFKKYSSLEN…KCKNSKFSEK (234 aa)) are adenylyltransferase. Residues glutamate 34, lysine 35, isoleucine 36, asparagine 40, arginine 55, and glutamate 99 each contribute to the AMP site. Lysine 35 (N6-AMP-lysine intermediate) is an active-site residue. Isoleucine 162, leucine 164, asparagine 166, glutamate 204, and tyrosine 206 together coordinate Mg(2+). Residues lysine 225 and lysine 227 each contribute to the AMP site.

Belongs to the RNA ligase 2 family. Mg(2+) is required as a cofactor. Mn(2+) serves as cofactor.

It carries out the reaction ATP + (ribonucleotide)n-3'-hydroxyl + 5'-phospho-(ribonucleotide)m = (ribonucleotide)n+m + AMP + diphosphate.. Functionally, repairs 3'-OH/5'-PO4 nicks in duplex RNA or RNA:DNA hybrid in which the broken 3'-OH strand is RNA. The nick ligation reaction entails three nucleotidyl transfer steps. In the first step, the RNA ligase reacts with ATP in the absence of nucleic acid to form a covalent ligase-AMP intermediate and release pyrophosphate. In step 2, the ligase-AMP binds to the nicked duplex nucleic acid and transfers the adenylate to the 5'-PO4 terminus to form an adenylylated nicked intermediate. In step 3, the RNA ligase directs the attack of the nick 3'-OH on the 5'-phosphoanhydride linkage, resulting in a repaired 3' - 5' phosphodiester and release of AMP. The chain is RNA ligase 2 (Y10A) from Enterobacteria phage T4 (Bacteriophage T4).